The following is a 174-amino-acid chain: Crossover junction endodeoxyribonuclease RuvC (174 aa).

Active-site residues include Asp8, Glu68, and Asp140. Positions 8, 68, and 140 each coordinate Mg(2+).

It belongs to the RuvC family. As to quaternary structure, homodimer which binds Holliday junction (HJ) DNA. The HJ becomes 2-fold symmetrical on binding to RuvC with unstacked arms; it has a different conformation from HJ DNA in complex with RuvA. In the full resolvosome a probable DNA-RuvA(4)-RuvB(12)-RuvC(2) complex forms which resolves the HJ. Requires Mg(2+) as cofactor.

Its subcellular location is the cytoplasm. The enzyme catalyses Endonucleolytic cleavage at a junction such as a reciprocal single-stranded crossover between two homologous DNA duplexes (Holliday junction).. Functionally, the RuvA-RuvB-RuvC complex processes Holliday junction (HJ) DNA during genetic recombination and DNA repair. Endonuclease that resolves HJ intermediates. Cleaves cruciform DNA by making single-stranded nicks across the HJ at symmetrical positions within the homologous arms, yielding a 5'-phosphate and a 3'-hydroxyl group; requires a central core of homology in the junction. The consensus cleavage sequence is 5'-(A/T)TT(C/G)-3'. Cleavage occurs on the 3'-side of the TT dinucleotide at the point of strand exchange. HJ branch migration catalyzed by RuvA-RuvB allows RuvC to scan DNA until it finds its consensus sequence, where it cleaves and resolves the cruciform DNA. The polypeptide is Crossover junction endodeoxyribonuclease RuvC (Legionella pneumophila (strain Paris)).